A 94-amino-acid chain; its full sequence is Co-chaperonin GroES (94 aa).

Belongs to the GroES chaperonin family. In terms of assembly, heptamer of 7 subunits arranged in a ring. Interacts with the chaperonin GroEL.

It localises to the cytoplasm. Together with the chaperonin GroEL, plays an essential role in assisting protein folding. The GroEL-GroES system forms a nano-cage that allows encapsulation of the non-native substrate proteins and provides a physical environment optimized to promote and accelerate protein folding. GroES binds to the apical surface of the GroEL ring, thereby capping the opening of the GroEL channel. This chain is Co-chaperonin GroES, found in Streptococcus pneumoniae serotype 19F (strain G54).